The primary structure comprises 186 residues: Acireductone dioxygenase (186 aa).

Positions 96, 98, 102, and 140 each coordinate Fe(2+). Positions 96, 98, 102, and 140 each coordinate Ni(2+).

This sequence belongs to the acireductone dioxygenase (ARD) family. In terms of assembly, monomer. Fe(2+) serves as cofactor. It depends on Ni(2+) as a cofactor.

It carries out the reaction 1,2-dihydroxy-5-(methylsulfanyl)pent-1-en-3-one + O2 = 3-(methylsulfanyl)propanoate + CO + formate + 2 H(+). The catalysed reaction is 1,2-dihydroxy-5-(methylsulfanyl)pent-1-en-3-one + O2 = 4-methylsulfanyl-2-oxobutanoate + formate + 2 H(+). Its pathway is amino-acid biosynthesis; L-methionine biosynthesis via salvage pathway; L-methionine from S-methyl-5-thio-alpha-D-ribose 1-phosphate: step 5/6. Catalyzes 2 different reactions between oxygen and the acireductone 1,2-dihydroxy-3-keto-5-methylthiopentene (DHK-MTPene) depending upon the metal bound in the active site. Fe-containing acireductone dioxygenase (Fe-ARD) produces formate and 2-keto-4-methylthiobutyrate (KMTB), the alpha-ketoacid precursor of methionine in the methionine recycle pathway. Ni-containing acireductone dioxygenase (Ni-ARD) produces methylthiopropionate, carbon monoxide and formate, and does not lie on the methionine recycle pathway. This is Acireductone dioxygenase from Methylococcus capsulatus (strain ATCC 33009 / NCIMB 11132 / Bath).